The following is a 1108-amino-acid chain: Mediator of RNA polymerase II transcription subunit 14 (1108 aa).

Disordered stretches follow at residues 1 to 30 (MAAVMMNGVGPDGAMKPNLDQKLNNHGGDT), 35 to 54 (SSEIVQQQTPARSLQSDNPL), and 1048 to 1108 (QQQR…VDLT). Positions 35–52 (SSEIVQQQTPARSLQSDN) are enriched in polar residues. Over residues 1048-1080 (QQQRQPVVQPGQQPQVQNQANGVMNRGPQRPGL) the composition is skewed to low complexity.

The protein belongs to the Mediator complex subunit 14 family. In terms of assembly, component of the Mediator complex.

It is found in the nucleus. Functionally, component of the Mediator complex, a coactivator involved in the regulated transcription of nearly all RNA polymerase II-dependent genes. Mediator functions as a bridge to convey information from gene-specific regulatory proteins to the basal RNA polymerase II transcription machinery. Mediator is recruited to promoters by direct interactions with regulatory proteins and serves as a scaffold for the assembly of a functional preinitiation complex with RNA polymerase II and the general transcription factors. The chain is Mediator of RNA polymerase II transcription subunit 14 (RGR1) from Pyricularia oryzae (strain 70-15 / ATCC MYA-4617 / FGSC 8958) (Rice blast fungus).